The following is a 287-amino-acid chain: MIKIGAHMKISKGFTKVPPDTANIGGNTFQIFTSSPRVWKVNPPKENDVEGFKNAMTEFNINFEDVLVHSSYLINLASPKDDIREKSITAMIEEIKATDQLGILHYNFHPGSHLGEGEEFGINKILEGLDIIFKEVQNTKVTILLENVAQKGSNIGYSMEQLGRIINKSPWKERLGITYDTCHGFDSNYDIRKKEEVQRLLDEIDKYIGLNKLKMIHLNDSKYDVGAAKDRHEFIGKGYIGREGFKTFLSFDEISKLPLILETPGDDPEHSQDIKVVKEIFKELGKL.

9 residues coordinate Zn(2+): H69, H109, E146, D180, H183, H217, D230, H232, and E262.

It belongs to the AP endonuclease 2 family. Zn(2+) is required as a cofactor.

The catalysed reaction is Endonucleolytic cleavage to 5'-phosphooligonucleotide end-products.. In terms of biological role, endonuclease IV plays a role in DNA repair. It cleaves phosphodiester bonds at apurinic or apyrimidinic (AP) sites, generating a 3'-hydroxyl group and a 5'-terminal sugar phosphate. The chain is Probable endonuclease 4 from Petrotoga mobilis (strain DSM 10674 / SJ95).